Here is a 151-residue protein sequence, read N- to C-terminus: uncharacterized protein (151 aa).

Residues 1–24 (MHAKTKKLGTDTSYKRPQVTAQEQ) form a disordered region.

This is an uncharacterized protein from Acanthamoeba polyphaga mimivirus (APMV).